The chain runs to 137 residues: Nucleoside diphosphate kinase (137 aa).

ATP contacts are provided by lysine 9, phenylalanine 57, arginine 85, threonine 91, and arginine 102. The Pros-phosphohistidine intermediate role is filled by histidine 119.

Belongs to the NDK family. In terms of assembly, homotetramer. Requires Mg(2+) as cofactor.

Its subcellular location is the cytoplasm. It catalyses the reaction a 2'-deoxyribonucleoside 5'-diphosphate + ATP = a 2'-deoxyribonucleoside 5'-triphosphate + ADP. The catalysed reaction is a ribonucleoside 5'-diphosphate + ATP = a ribonucleoside 5'-triphosphate + ADP. Major role in the synthesis of nucleoside triphosphates other than ATP. The ATP gamma phosphate is transferred to the NDP beta phosphate via a ping-pong mechanism, using a phosphorylated active-site intermediate. The chain is Nucleoside diphosphate kinase from Streptococcus thermophilus (strain CNRZ 1066).